The primary structure comprises 423 residues: D-tagatose-1,6-bisphosphate aldolase subunit GatZ (423 aa).

Belongs to the GatZ/KbaZ family. GatZ subfamily. Forms a complex with GatY.

It participates in carbohydrate metabolism; D-tagatose 6-phosphate degradation; D-glyceraldehyde 3-phosphate and glycerone phosphate from D-tagatose 6-phosphate: step 2/2. Component of the tagatose-1,6-bisphosphate aldolase GatYZ that is required for full activity and stability of the Y subunit. Could have a chaperone-like function for the proper and stable folding of GatY. When expressed alone, GatZ does not show any aldolase activity. Is involved in the catabolism of galactitol. This Salmonella choleraesuis (strain SC-B67) protein is D-tagatose-1,6-bisphosphate aldolase subunit GatZ.